A 631-amino-acid polypeptide reads, in one-letter code: MKKSNPWFVFFWITLLVIVLMFINFARQGGNEVELEYSQFKQHIKAGSVFKVLVAPGLIRGQFRDGDGVFKRFKTVPMDDPNLVKDMEDNKVLEFSATEKSGWLGSLLLNWGPVVLLILFCFWMMRGMSMGNKQAMSFGKTKAKLAVGASKKITFKDVAGCDEAKEELQELIEFLKDPARFQKLGGKIPKGVLLFGSPGTGKTLLAKAVAGEANVPFFSSSGSEFVEMFVGVGASRVRDLFDHGRKSAPCLLFIDEIDAVGRHRFAGIGGGHDEREQTLNQLLVEMDGFDSKEGVILIAATNRPDVLDPALLRPGRFDRQVIILSPDLKDREEILGVHSKKIRLDNDVNLNVIARRTPGFVGADLANLVNEAALLAARNSQNAVNMKNMEEAIDRILAGPQRKSRLMSDKEKNIIAYHEAGHTLVAKFLPSADPVHKVSIIPRGPALGYTLQLPEEDKYLTSKSELLDKLSILFGGRVAEELVFSEITTGAQNDISKATGIAMRMVTEFGMSDKIGPMALQRPNEEVFLGRDISRDARHSGKTSELIDEEVKNIIYSSKSRASKIIKDNVSILNKIVSYLLERENLSGEDIDKIIKGEELAPLSESSSVDEETKKKSTVEKKVINEKVIIS.

Topologically, residues 1-5 (MKKSN) are cytoplasmic. A helical transmembrane segment spans residues 6 to 26 (PWFVFFWITLLVIVLMFINFA). The Periplasmic portion of the chain corresponds to 27–102 (RQGGNEVELE…LEFSATEKSG (76 aa)). The chain crosses the membrane as a helical span at residues 103–123 (WLGSLLLNWGPVVLLILFCFW). Topologically, residues 124–631 (MMRGMSMGNK…KVINEKVIIS (508 aa)) are cytoplasmic. Position 196–203 (196–203 (GSPGTGKT)) interacts with ATP. H418 provides a ligand contact to Zn(2+). The active site involves E419. Zn(2+)-binding residues include H422 and D494.

The protein in the central section; belongs to the AAA ATPase family. It in the C-terminal section; belongs to the peptidase M41 family. Homohexamer. Requires Zn(2+) as cofactor.

Its subcellular location is the cell inner membrane. Acts as a processive, ATP-dependent zinc metallopeptidase for both cytoplasmic and membrane proteins. Plays a role in the quality control of integral membrane proteins. The chain is ATP-dependent zinc metalloprotease FtsH from Endomicrobium trichonymphae.